Consider the following 178-residue polypeptide: Large ribosomal subunit protein uL6 (178 aa).

It belongs to the universal ribosomal protein uL6 family. Part of the 50S ribosomal subunit.

Its function is as follows. This protein binds to the 23S rRNA, and is important in its secondary structure. It is located near the subunit interface in the base of the L7/L12 stalk, and near the tRNA binding site of the peptidyltransferase center. The sequence is that of Large ribosomal subunit protein uL6 from Staphylococcus saprophyticus subsp. saprophyticus (strain ATCC 15305 / DSM 20229 / NCIMB 8711 / NCTC 7292 / S-41).